Reading from the N-terminus, the 535-residue chain is Large neutral amino acids transporter small subunit 2 (535 aa).

Over residues 1–17 (MEEGARHRNNTEKKHPG) the composition is skewed to basic and acidic residues. The segment at 1-30 (MEEGARHRNNTEKKHPGGGESDASPEAGSG) is disordered. At 1 to 44 (MEEGARHRNNTEKKHPGGGESDASPEAGSGGGGVALKKEIGLVS) the chain is on the cytoplasmic side. Serine 29 is subject to Phosphoserine. The helical transmembrane segment at 45–65 (ACGIIVGNIIGSGIFVSPKGV) threads the bilayer. Residue isoleucine 53 coordinates L-leucine. The Extracellular segment spans residues 66 to 73 (LENAGSVG). A helical transmembrane segment spans residues 74–95 (LALIVWIVTGFITVVGALCYAE). Topologically, residues 96-116 (LGVTIPKSGGDYSYVKDIFGG) are cytoplasmic. The chain crosses the membrane as a helical span at residues 117 to 149 (LAGFLRLWIAVLVIYPTNQAVIALTFSNYVLQP). An L-tryptophan-binding site is contributed by asparagine 134. Residues 150-157 (LFPTCFPP) are Extracellular-facing. A helical transmembrane segment spans residues 158-178 (ESGLRLLAAICLLLLTWVNCS). Residues 179–181 (SVR) are Cytoplasmic-facing. Residues 182-210 (WATRVQDIFTAGKLLALALIIIMGIVQIC) traverse the membrane as a helical segment. At 211–230 (KGEYFWLEPKNAFENFQEPD) the chain is on the extracellular side. The chain crosses the membrane as a helical span at residues 231 to 252 (IGLVALAFLQGSFAYGGWNFLN). Glycine 246 provides a ligand contact to L-leucine. Residues 253 to 265 (YVTEELVDPYKNL) lie on the Cytoplasmic side of the membrane. The chain crosses the membrane as a helical span at residues 266–287 (PRAIFISIPLVTFVYVFANVAY). The Extracellular segment spans residues 288-312 (VTAMSPQELLASNAVAVTFGEKLLG). A helical transmembrane segment spans residues 313-338 (VMAWIMPISVALSTFGGVNGSLFTSS). At 339–364 (RLFFAGAREGHLPSVLAMIHVKRCTP) the chain is on the cytoplasmic side. A helical transmembrane segment spans residues 365-382 (IPALLFTCISTLLMLVTS). Residues 383–386 (DMYT) are Extracellular-facing. The helical transmembrane segment at 387–408 (LINYVGFINYLFYGVTVAGQIV) threads the bilayer. Asparagine 395 provides a ligand contact to L-tryptophan. The Cytoplasmic portion of the chain corresponds to 409–423 (LRWKKPDIPRPIKIN). The next 2 helical transmembrane spans lie at 424 to 446 (LLFP…WSEP) and 447 to 466 (VVCG…YFLG). The Cytoplasmic segment spans residues 467 to 535 (VYWQHKPKCF…DKDVAGQPQP (69 aa)). Residues 502–535 (SGTEEANEDMEEQQQPMYQPTPTKDKDVAGQPQP) are disordered. Positions 514–523 (QQQPMYQPTP) are enriched in polar residues.

Belongs to the amino acid-polyamine-organocation (APC) superfamily. L-type amino acid transporter (LAT) (TC 2.A.3.8) family. As to quaternary structure, disulfide-linked heterodimer composed of the catalytic light chain subunit SLC7A8 and the heavy chain subunit SLC3A2. SLC3A2 acts as chaperones for correct plasma membrane trafficking and stabilization of SLC7A8 and modulates the substrate affinity and specificity of SLC7A8. ICAM-1 associates with the heterodimer SLC3A2/SLC7A8; this interaction regulates SLC7A8 activity. In terms of tissue distribution, strongest expression is observed in kidney and moderate expression in placenta and brain, followed by liver, prostate, testis, ovary, lymph node, thymus, spleen, skeletal muscle and heart. Also expressed in fetal liver as well as in the retinal pigment epithelial cell line ARPE-19 and the intestinal epithelial cell line Caco-2.

Its subcellular location is the cell membrane. The protein localises to the basolateral cell membrane. It carries out the reaction L-histidine(in) + L-phenylalanine(out) = L-histidine(out) + L-phenylalanine(in). The enzyme catalyses L-tryptophan(in) + L-phenylalanine(out) = L-tryptophan(out) + L-phenylalanine(in). The catalysed reaction is L-isoleucine(in) + L-phenylalanine(out) = L-isoleucine(out) + L-phenylalanine(in). It catalyses the reaction L-valine(in) + L-phenylalanine(out) = L-valine(out) + L-phenylalanine(in). It carries out the reaction L-leucine(in) + L-phenylalanine(out) = L-leucine(out) + L-phenylalanine(in). The enzyme catalyses L-glutamine(in) + L-phenylalanine(out) = L-glutamine(out) + L-phenylalanine(in). The catalysed reaction is L-cysteine(in) + L-phenylalanine(out) = L-cysteine(out) + L-phenylalanine(in). It catalyses the reaction L-phenylalanine(out) + L-methionine(in) = L-phenylalanine(in) + L-methionine(out). It carries out the reaction L-leucine(out) + L-methionine(in) = L-leucine(in) + L-methionine(out). The enzyme catalyses L-cysteine(out) + L-methionine(in) = L-cysteine(in) + L-methionine(out). The catalysed reaction is S-methylmercury-L-cysteine(out) + L-methionine(in) = S-methylmercury-L-cysteine(in) + L-methionine(out). It catalyses the reaction S-methylmercury-L-cysteine(in) + L-leucine(out) = S-methylmercury-L-cysteine(out) + L-leucine(in). It carries out the reaction S-methylmercury-L-cysteine(in) + L-phenylalanine(out) = S-methylmercury-L-cysteine(out) + L-phenylalanine(in). The enzyme catalyses L-phenylalanine(out) + L-serine(in) = L-phenylalanine(in) + L-serine(out). The catalysed reaction is L-phenylalanine(out) + glycine(in) = L-phenylalanine(in) + glycine(out). It catalyses the reaction L-phenylalanine(out) + L-alanine(in) = L-phenylalanine(in) + L-alanine(out). It carries out the reaction 3,3'-diiodo-L-thyronine(out) = 3,3'-diiodo-L-thyronine(in). The enzyme catalyses 3,3',5-triiodo-L-thyronine(out) = 3,3',5-triiodo-L-thyronine(in). The catalysed reaction is L-dopa(out) + L-phenylalanine(in) = L-dopa(in) + L-phenylalanine(out). Its activity is regulated as follows. Inhibited by the L-type inhibitor 2-Aminobicyclo-(2,2,1)-heptane-2-carboxylic acid (BCH). Its function is as follows. Associates with SLC3A2 to form a functional heterodimeric complex that translocates small and large neutral amino acids with broad specificity and a stoichiometry of 1:1. Functions as amino acid antiporter mediating the influx of extracellular essential amino acids mainly in exchange with the efflux of highly concentrated intracellular amino acids. Has relatively symmetrical selectivities but strongly asymmetrical substrate affinities at both the intracellular and extracellular sides of the transporter. This asymmetry allows SLC7A8 to regulate intracellular amino acid pools (mM concentrations) by exchange with external amino acids (uM concentration range), equilibrating the relative concentrations of different amino acids across the plasma membrane instead of mediating their net uptake. May play an essential role in the reabsorption of neutral amino acids from the epithelial cells to the bloodstream in the kidney. Involved in the uptake of methylmercury (MeHg) when administered as the L-cysteine or D,L-homocysteine complexes, and hence plays a role in metal ion homeostasis and toxicity. Involved in the cellular activity of small molecular weight nitrosothiols, via the stereoselective transport of L-nitrosocysteine (L-CNSO) across the transmembrane. Imports the thyroid hormone diiodothyronine (T2) and to a smaller extent triiodothyronine (T3) but not rT 3 or thyroxine (T4). Mediates the uptake of L-DOPA. May participate in auditory function. This chain is Large neutral amino acids transporter small subunit 2, found in Homo sapiens (Human).